The following is an 851-amino-acid chain: MMIGKLKYLMLGGCLILGSCLALGGCLMLLGACSSSSLVSPRERSDFNADWRFHLGDGLQAAQPGFADNDWRVLDLPHDWAIEGDFSQENPSGTGGGALPGGVGWYRKTFSVDKADAGKIFRIEFDGVYMNSEVFINGVSLGVRPYGYISFSYDLTPYLKWDEPNVLAVRVDNAEQPNSRWYSGCGIYRNVWLSKTGPIHVGGWGTYVTTSSVDEKQAVLNLATTLVNESDTNENVTVCSSLQDAEGREVAETRSSGEAEAGKEVVFTQQLTVKQPQLWDIDTPYLYTLVTKVMRNEECMDRYTTPVGIRTFSLDARKGFTLNGRQTKINGVCMHHDLGCLGAAVNTRAIERHLQILKEMGCNGIRCSHNPPAPELLDLCDRMGFIVMDEAFDMWRKKKTAHDYARYFNEWHERDLNDFILRDRNHPSVFMWSIGNEVLEQWSDAKADTLSLEEANLILNFGHSSEMLAKEGEESVNSLLTKKLVSFVKGLDPTRPVTAGCNEPNSGNHLFRSGVLDVIGYNYHNKDIPNVPANFPDKPFIITESNSALMTRGYYRMPSDRMFIWPKRWDKSFADSTFACSSYENCHVPWGNTHEESLKLVRDNDFISGQYVWTGFDYIGEPTPYGWPARSSYFGIVDLAGFPKDVYYLYQSEWTDKQVLHLFPHWNWTPGQEIDMWCYYNQADEVELFVNGKSQGVKRKDLDNLHVAWRVKFEPGTVKVIARESGKVVAEKEICTAGKPAEIRLTPDRSILTADGKDLCFVTVEVLDEKGNLCPDADNLVNFTVQGNGFIAGVDNGNPVSMERFKDEKRKAFYGKCLVVIQNDGKPGKAKLTATSEGLRQAVLKISAEEL.

The N-terminal stretch at 1–19 (MMIGKLKYLMLGGCLILGS) is a signal peptide. C20 carries the N-palmitoyl cysteine lipid modification. A lipid anchor (S-diacylglycerol cysteine) is attached at C20. E437 serves as the catalytic Proton donor. The Nucleophile role is filled by E544.

Belongs to the glycosyl hydrolase 2 family.

It localises to the cell inner membrane. It carries out the reaction Hydrolysis of terminal non-reducing beta-D-galactose residues in beta-D-galactosides.. It functions in the pathway glucan metabolism; xyloglucan degradation. Functionally, catalyzes the hydrolysis of terminal non-reducing beta-D-galactose residues in beta-D-galactosides in xyloglucan degradation, converting 'L' units to 'X' units. The polypeptide is Beta-galactosidase BoGH2A (Bacteroides ovatus (strain ATCC 8483 / DSM 1896 / JCM 5824 / BCRC 10623 / CCUG 4943 / NCTC 11153)).